We begin with the raw amino-acid sequence, 257 residues long: Adenosylcobinamide-GDP ribazoletransferase (257 aa).

7 consecutive transmembrane segments (helical) span residues 30 to 50 (IVYF…IGWI), 52 to 72 (MLLF…VLIT), 109 to 129 (SLLA…DIIS), 132 to 152 (SLWV…LLTY), 175 to 195 (LITA…FIFL), 198 to 218 (NIVL…IILF), and 237 to 257 (GIEL…FMFF).

Belongs to the CobS family. Mg(2+) is required as a cofactor.

It is found in the cell membrane. It carries out the reaction alpha-ribazole + adenosylcob(III)inamide-GDP = adenosylcob(III)alamin + GMP + H(+). It catalyses the reaction alpha-ribazole 5'-phosphate + adenosylcob(III)inamide-GDP = adenosylcob(III)alamin 5'-phosphate + GMP + H(+). It participates in cofactor biosynthesis; adenosylcobalamin biosynthesis; adenosylcobalamin from cob(II)yrinate a,c-diamide: step 7/7. Its function is as follows. Joins adenosylcobinamide-GDP and alpha-ribazole to generate adenosylcobalamin (Ado-cobalamin). Also synthesizes adenosylcobalamin 5'-phosphate from adenosylcobinamide-GDP and alpha-ribazole 5'-phosphate. The protein is Adenosylcobinamide-GDP ribazoletransferase of Clostridioides difficile (strain 630) (Peptoclostridium difficile).